Here is a 398-residue protein sequence, read N- to C-terminus: MKRIYVVGTADTKGEELVYLASCVEAAGGRPVLVDVGTRRPTVLVDISAETVAAVHPGGAAAVLSGNDRGTAIAAMGEAFARFLPARDDVAGVVGMGGGGGTSIITAGMRRLPLGLPKVMVSTLASGDVGPYVDVSDIIMMPSVTDMAGLNRVSRVILKNAAEAITAMANRPAEETASKPAIGLTMFGVTTPCVTAIVERLKADHDCLVFHATGTGGRAMEKLADSGLLSGVLDITTTEVCDLVFGGVLPATEDRFGAIARTDLPYVGSVGALDMVNFWAPETVPERYSGRLLYRHNPNVTLMRTTPEECAAIGRWIGAKLNLCSGPLRFLIPERGVSALDIEGGAFFDPAADAALFEALETTVNRSDRRRIERLPLHINDPQFAEAAVAAYRDIANP.

It belongs to the UPF0261 family.

The protein is UPF0261 protein RA0729 of Rhizobium meliloti (strain 1021) (Ensifer meliloti).